Consider the following 43-residue polypeptide: Cytochrome b559 subunit beta (43 aa).

The chain crosses the membrane as a helical span at residues 18 to 34 (WLSVHALGIPTIFFLGA). Position 22 (His22) interacts with heme.

The protein belongs to the PsbE/PsbF family. In terms of assembly, heterodimer of an alpha subunit and a beta subunit. PSII is composed of 1 copy each of membrane proteins PsbA, PsbB, PsbC, PsbD, PsbE, PsbF, PsbH, PsbI, PsbJ, PsbK, PsbL, PsbM, PsbT, PsbX, PsbY, PsbZ, Psb30/Ycf12, at least 3 peripheral proteins of the oxygen-evolving complex and a large number of cofactors. It forms dimeric complexes. Heme b is required as a cofactor.

The protein resides in the plastid. Its subcellular location is the chloroplast thylakoid membrane. In terms of biological role, this b-type cytochrome is tightly associated with the reaction center of photosystem II (PSII). PSII is a light-driven water:plastoquinone oxidoreductase that uses light energy to abstract electrons from H(2)O, generating O(2) and a proton gradient subsequently used for ATP formation. It consists of a core antenna complex that captures photons, and an electron transfer chain that converts photonic excitation into a charge separation. The protein is Cytochrome b559 subunit beta of Stigeoclonium helveticum (Green alga).